Here is a 390-residue protein sequence, read N- to C-terminus: Queuine tRNA-ribosyltransferase (390 aa).

Residue Asp92 is the Proton acceptor of the active site. Substrate-binding positions include 92–96 (DSGGF), Asp146, Gln195, and Gly222. The tract at residues 253-259 (GVGTPED) is RNA binding. Residue Asp272 is the Nucleophile of the active site. The RNA binding; important for wobble base 34 recognition stretch occupies residues 277–281 (TRNAR). Residues Cys310, Cys312, Cys315, and His354 each contribute to the Zn(2+) site.

This sequence belongs to the queuine tRNA-ribosyltransferase family. As to quaternary structure, homodimer. Within each dimer, one monomer is responsible for RNA recognition and catalysis, while the other monomer binds to the replacement base PreQ1. It depends on Zn(2+) as a cofactor.

It carries out the reaction 7-aminomethyl-7-carbaguanine + guanosine(34) in tRNA = 7-aminomethyl-7-carbaguanosine(34) in tRNA + guanine. It functions in the pathway tRNA modification; tRNA-queuosine biosynthesis. In terms of biological role, catalyzes the base-exchange of a guanine (G) residue with the queuine precursor 7-aminomethyl-7-deazaguanine (PreQ1) at position 34 (anticodon wobble position) in tRNAs with GU(N) anticodons (tRNA-Asp, -Asn, -His and -Tyr). Catalysis occurs through a double-displacement mechanism. The nucleophile active site attacks the C1' of nucleotide 34 to detach the guanine base from the RNA, forming a covalent enzyme-RNA intermediate. The proton acceptor active site deprotonates the incoming PreQ1, allowing a nucleophilic attack on the C1' of the ribose to form the product. After dissociation, two additional enzymatic reactions on the tRNA convert PreQ1 to queuine (Q), resulting in the hypermodified nucleoside queuosine (7-(((4,5-cis-dihydroxy-2-cyclopenten-1-yl)amino)methyl)-7-deazaguanosine). The polypeptide is Queuine tRNA-ribosyltransferase (Delftia acidovorans (strain DSM 14801 / SPH-1)).